Here is a 455-residue protein sequence, read N- to C-terminus: Trigger factor (455 aa).

Residues 169 to 262 (GDVAIVDYEG…VKELKAKELP (94 aa)) form the PPIase FKBP-type domain.

This sequence belongs to the FKBP-type PPIase family. Tig subfamily.

Its subcellular location is the cytoplasm. The catalysed reaction is [protein]-peptidylproline (omega=180) = [protein]-peptidylproline (omega=0). Its function is as follows. Involved in protein export. Acts as a chaperone by maintaining the newly synthesized protein in an open conformation. Functions as a peptidyl-prolyl cis-trans isomerase. The polypeptide is Trigger factor (Rippkaea orientalis (strain PCC 8801 / RF-1) (Cyanothece sp. (strain PCC 8801))).